We begin with the raw amino-acid sequence, 345 residues long: D-fructose 1,6-bisphosphatase class 2/sedoheptulose 1,7-bisphosphatase (345 aa).

4 residues coordinate Mn(2+): Asp-33, Glu-57, Asp-97, and Glu-100. Substrate-binding positions include 100-102 (EGT), Tyr-131, 176-178 (RPR), and 198-200 (DGD). Glu-225 serves as a coordination point for Mn(2+).

This sequence belongs to the FBPase class 2 family. Homotetramer. Mn(2+) serves as cofactor.

It catalyses the reaction beta-D-fructose 1,6-bisphosphate + H2O = beta-D-fructose 6-phosphate + phosphate. The enzyme catalyses D-sedoheptulose 1,7-bisphosphate + H2O = D-sedoheptulose 7-phosphate + phosphate. It functions in the pathway carbohydrate biosynthesis; Calvin cycle. Catalyzes the hydrolysis of fructose 1,6-bisphosphate (Fru 1,6-P2) and sedoheptulose 1,7-bisphosphate (Sed 1,7-P2) to fructose 6-phosphate and sedoheptulose 7-phosphate, respectively. The sequence is that of D-fructose 1,6-bisphosphatase class 2/sedoheptulose 1,7-bisphosphatase from Trichodesmium erythraeum (strain IMS101).